A 227-amino-acid polypeptide reads, in one-letter code: uncharacterized protein (227 aa).

This sequence belongs to the flavoredoxin family. The cofactor is FMN.

This is an uncharacterized protein from Deinococcus radiodurans (strain ATCC 13939 / DSM 20539 / JCM 16871 / CCUG 27074 / LMG 4051 / NBRC 15346 / NCIMB 9279 / VKM B-1422 / R1).